Here is a 210-residue protein sequence, read N- to C-terminus: Large ribosomal subunit protein bL25 (210 aa).

Residues 1–23 form a disordered region; that stretch reads MSDIGTLSAKGRDRAGKGAARAT.

The protein belongs to the bacterial ribosomal protein bL25 family. CTC subfamily. Part of the 50S ribosomal subunit; part of the 5S rRNA/L5/L18/L25 subcomplex. Contacts the 5S rRNA. Binds to the 5S rRNA independently of L5 and L18.

In terms of biological role, this is one of the proteins that binds to the 5S RNA in the ribosome where it forms part of the central protuberance. The protein is Large ribosomal subunit protein bL25 of Rhodospirillum rubrum (strain ATCC 11170 / ATH 1.1.1 / DSM 467 / LMG 4362 / NCIMB 8255 / S1).